Reading from the N-terminus, the 398-residue chain is O-methyltransferase mpaG (398 aa).

Position 264 (Asp-264) interacts with S-adenosyl-L-methionine. The active-site Proton acceptor is His-306. Catalysis depends on residues Glu-335 and Glu-362.

It belongs to the class I-like SAM-binding methyltransferase superfamily. Cation-independent O-methyltransferase family. COMT subfamily.

Its subcellular location is the cytoplasm. It localises to the cytosol. It carries out the reaction (4E,8E)-10-(4,6-dihydroxy-7-methyl-3-oxo-1,3-dihydro-2-benzofuran-5-yl)-4,8-dimethyldeca-4,8-dienoate + S-adenosyl-L-methionine = (4E,8E)-10-(4-hydroxy-6-methoxy-7-methyl-3-oxo-1,3-dihydro-2-benzofuran-5-yl)-4,8-dimethyldeca-4,8-dienoate + S-adenosyl-L-homocysteine + H(+). The protein operates within secondary metabolite biosynthesis; terpenoid biosynthesis. O-methyltransferase; part of the gene cluster that mediates the biosynthesis of mycophenolic acid (MPA), the first isolated antibiotic natural product in the world obtained from a culture of Penicillium brevicompactum in 1893. MpaC methylates farnesyl-DHMP-3C (FDHMP-3C) to yield MFDHMP-3C. The first step of the pathway is the synthesis of 5-methylorsellinic acid (5MOA) by the cytosolic polyketide synthase mpaC. 5MOA is then converted to the phthalide compound 5,7-dihydroxy-4,6-dimethylphthalide (DHMP) by the endoplasmic reticulum-bound cytochrome P450 monooxygenase mpaDE. MpaDE first catalyzes hydroxylation of 5-MOA to 4,6-dihydroxy-2-(hydroxymethyl)-3-methylbenzoic acid (DHMB). MpaDE then acts as a lactone synthase that catalyzes the ring closure to convert DHMB into DHMP. The next step is the prenylation of DHMP by the Golgi apparatus-associated prenyltransferase mpaA to yield farnesyl-DHMP (FDHMP). The ER-bound oxygenase mpaB then mediates the oxidative cleavage the C19-C20 double bond in FDHMP to yield FDHMP-3C via a mycophenolic aldehyde intermediate. The O-methyltransferase mpaG catalyzes the methylation of FDHMP-3C to yield MFDHMP-3C. After the cytosolic methylation of FDHMP-3C, MFDHMP-3C enters into peroxisomes probably via free diffusion due to its low molecular weight. Upon a peroxisomal CoA ligation reaction, catalyzed by a beta-oxidation component enzyme acyl-CoA ligase ACL891, MFDHMP-3C-CoA would then be restricted to peroxisomes for the following beta-oxidation pathway steps. The peroxisomal beta-oxidation machinery than converts MFDHMP-3C-CoA into MPA_CoA, via a beta-oxidation chain-shortening process. Finally mpaH acts as a peroxisomal acyl-CoA hydrolase with high substrate specificity toward MPA-CoA to release the final product MPA. The protein is O-methyltransferase mpaG of Penicillium roqueforti (strain FM164).